The following is a 111-amino-acid chain: WAP four-disulfide core domain protein 12 (111 aa).

An N-terminal signal peptide occupies residues 1-23 (MRSSRFLVLMVSLALVTLVASEG). One can recognise a WAP domain in the interval 27–74 (NTEKPGVCPADNVRCIKSDPPQCHTDQDCQGIRKCCYLHCGFKCVIPV). Disulfide bonds link C34–C62, C41–C66, C49–C61, and C55–C70.

It is found in the secreted. In terms of biological role, antibacterial protein. Putative acid-stable proteinase inhibitor. The protein is WAP four-disulfide core domain protein 12 (WFDC12) of Saimiri boliviensis boliviensis (Bolivian squirrel monkey).